The primary structure comprises 731 residues: Zinc finger protein 615 (731 aa).

One can recognise a KRAB domain in the interval 8 to 79; the sequence is LTLEDVAVDF…EDEIYSRICS (72 aa). 19 consecutive C2H2-type zinc fingers follow at residues 204-226, 232-254, 260-282, 288-310, 316-338, 344-366, 372-394, 400-422, 428-450, 456-478, 484-506, 512-534, 540-562, 568-590, 596-618, 624-646, 652-674, 680-702, and 708-730; these read HVCSECGKAFLKLSQFIDHQRVH, HVCSMCGKAFSRKSRLMDHQRTH, YECTECDKTFLKKSQLNIHQKTH, YTCSQCGKAFIKKCRLIYHQRTH, HGCSVCGKAFSTKFSLTTHQKTH, YICSECGKGFIEKRRLTAHHRTH, FICNKCGKGFTLKNSLITHQQTH, YTCSECGKGFSMKHCLMVHQRTH, YKCNECGKGFALKSPLIRHQRTH, YVCTECRKGFTMKSDLIVHQRTH, YICNDCGKGFTVKSRLIVHQRTH, YVCGECGKGFPAKIRLMGHQRTH, YICNECGKGFTEKSHLNVHRRTH, YVCSECGKGLTGKSMLIAHQRTH, YICNECGKGFTMKSTLSIHQQTH, YKCNECDKTFRKKTCLIQHQRFH, FACTECGKFSLRKNDLITHQRIH, YKCSDCGKAFTTKSGLNVHQRKH, and YGCSDCGKAFAHLSILVKHRRIH.

This sequence belongs to the krueppel C2H2-type zinc-finger protein family.

The protein resides in the nucleus. In terms of biological role, may be involved in transcriptional regulation. This Homo sapiens (Human) protein is Zinc finger protein 615 (ZNF615).